We begin with the raw amino-acid sequence, 529 residues long: Bifunctional purine biosynthesis protein PurH (529 aa).

In terms of domain architecture, MGS-like spans 1-148 (MQQRRPVRRA…KNHKDVAIVV (148 aa)). Lysine 287 bears the N6-acetyllysine mark.

Belongs to the PurH family.

It catalyses the reaction (6R)-10-formyltetrahydrofolate + 5-amino-1-(5-phospho-beta-D-ribosyl)imidazole-4-carboxamide = 5-formamido-1-(5-phospho-D-ribosyl)imidazole-4-carboxamide + (6S)-5,6,7,8-tetrahydrofolate. The catalysed reaction is IMP + H2O = 5-formamido-1-(5-phospho-D-ribosyl)imidazole-4-carboxamide. Its pathway is purine metabolism; IMP biosynthesis via de novo pathway; 5-formamido-1-(5-phospho-D-ribosyl)imidazole-4-carboxamide from 5-amino-1-(5-phospho-D-ribosyl)imidazole-4-carboxamide (10-formyl THF route): step 1/1. The protein operates within purine metabolism; IMP biosynthesis via de novo pathway; IMP from 5-formamido-1-(5-phospho-D-ribosyl)imidazole-4-carboxamide: step 1/1. This chain is Bifunctional purine biosynthesis protein PurH, found in Escherichia coli O9:H4 (strain HS).